The following is a 266-amino-acid chain: Undecaprenyl-diphosphatase (266 aa).

7 helical membrane-spanning segments follow: residues 41–61 (NLAF…VILW), 82–102 (YVIN…FFKD), 106–126 (AIFG…AALL), 140–160 (ISMK…LPGL), 180–200 (LAQF…LLDG), 213–233 (IPTL…CLAC), and 245–265 (LIYF…VSQL).

The protein belongs to the UppP family.

It localises to the cell inner membrane. The catalysed reaction is di-trans,octa-cis-undecaprenyl diphosphate + H2O = di-trans,octa-cis-undecaprenyl phosphate + phosphate + H(+). Catalyzes the dephosphorylation of undecaprenyl diphosphate (UPP). Confers resistance to bacitracin. This is Undecaprenyl-diphosphatase from Bacteroides fragilis (strain ATCC 25285 / DSM 2151 / CCUG 4856 / JCM 11019 / LMG 10263 / NCTC 9343 / Onslow / VPI 2553 / EN-2).